The following is a 331-amino-acid chain: 7,8-didemethyl-8-hydroxy-5-deazariboflavin synthase (331 aa).

Positions 6 to 244 (ITFSKNAFLP…ADVAVQIPPN (239 aa)) constitute a Radical SAM core domain. Residues Cys-20, Cys-24, and Cys-27 each contribute to the [4Fe-4S] cluster site.

This sequence belongs to the radical SAM superfamily. CofG family. In terms of assembly, consists of two subunits, CofG and CofH. The cofactor is [4Fe-4S] cluster.

The enzyme catalyses 5-amino-5-(4-hydroxybenzyl)-6-(D-ribitylimino)-5,6-dihydrouracil + S-adenosyl-L-methionine = 7,8-didemethyl-8-hydroxy-5-deazariboflavin + 5'-deoxyadenosine + L-methionine + NH4(+) + H(+). The protein operates within cofactor biosynthesis; coenzyme F0 biosynthesis. Functionally, catalyzes the radical-mediated synthesis of 7,8-didemethyl-8-hydroxy-5-deazariboflavin from 5-amino-5-(4-hydroxybenzyl)-6-(D-ribitylimino)-5,6-dihydrouracil. In Methanoculleus marisnigri (strain ATCC 35101 / DSM 1498 / JR1), this protein is 7,8-didemethyl-8-hydroxy-5-deazariboflavin synthase.